A 101-amino-acid polypeptide reads, in one-letter code: Cilia- and flagella-associated protein 141 (101 aa).

As to quaternary structure, microtubule inner protein component of sperm flagellar doublet microtubules.

It localises to the cytoplasm. The protein localises to the cytoskeleton. Its subcellular location is the cilium axoneme. The protein resides in the flagellum axoneme. Microtubule inner protein (MIP) part of the dynein-decorated doublet microtubules (DMTs) in cilia axoneme, which is required for motile cilia beating. This is Cilia- and flagella-associated protein 141 from Mus musculus (Mouse).